A 106-amino-acid chain; its full sequence is Small ribosomal subunit protein uS10 (106 aa).

This sequence belongs to the universal ribosomal protein uS10 family. Part of the 30S ribosomal subunit.

Functionally, involved in the binding of tRNA to the ribosomes. The protein is Small ribosomal subunit protein uS10 of Archaeoglobus fulgidus (strain ATCC 49558 / DSM 4304 / JCM 9628 / NBRC 100126 / VC-16).